We begin with the raw amino-acid sequence, 1849 residues long: Brefeldin A-inhibited guanine nucleotide-exchange protein 1 (1849 aa).

Positions 2–224 (YEGKKTKNMF…QEAKQMEKER (223 aa)) are DCB; DCB:DCB domain and DCB:HUS domain interaction. The span at 46–58 (AETEKQSPPHGEA) shows a compositional bias: basic and acidic residues. 4 disordered regions span residues 46 to 65 (AETE…SSTL), 216 to 248 (EAKQ…QLRY), 267 to 302 (LHTN…DQAT), and 378 to 413 (TPIS…SPGA). Ser52 carries the post-translational modification Phosphoserine. Residues 267–277 (LHTNDVDKSLQ) are compositionally biased toward basic and acidic residues. Phosphoserine is present on residues Ser286, Ser289, Ser290, Ser397, and Ser410. Positions 394–409 (SVSSNDTQESGNSSGP) are enriched in polar residues. An HUS; DCB:HUS domain interaction region spans residues 557 to 577 (ADAQSVVDIYVNYDCDLNAAN). The region spanning 709–840 (FNKKPKRGIQ…IIMLTTDLHS (132 aa)) is the SEC7 domain. A Nuclear localization signal (NLS) motif is present at residues 711–715 (KKPKR). Phosphoserine is present on Ser1079. Residues 1543 to 1562 (RPNSGETAPPPPSPVSEKPL) are disordered. Phosphoserine occurs at positions 1566 and 1569.

Homodimer. Interacts with ARFGEF2/BIG2; both proteins are probably part of the same or very similar macromolecular complexes. Interacts with FKBP2. Interacts with MYO9B. Interacts with PRKAR1A and PRKAR2A. Interacts with PPP1CC. Interacts with NCL, FBL, NUP62 and U3 small nucleolar RNA. Interacts with DPY30. Interacts with PDE3A. Interacts with KANK1. Interacts with TBC1D22A and TBC1D22B. Interacts (via N-terminus) with ARL1. Post-translationally, phosphorylated. In vitro phosphorylated by PKA reducing its GEF activity and dephosphorylated by phosphatase PP1. In terms of tissue distribution, expressed in placenta, lung, heart, brain, kidney and pancreas.

Its subcellular location is the cytoplasm. It is found in the perinuclear region. The protein localises to the golgi apparatus. It localises to the trans-Golgi network membrane. The protein resides in the nucleus. Its subcellular location is the nucleolus. It is found in the nucleus matrix. Inhibited by brefeldin A. Its function is as follows. Promotes guanine-nucleotide exchange on ARF1 and ARF3. Promotes the activation of ARF1/ARF3 through replacement of GDP with GTP. Involved in vesicular trafficking. Required for the maintenance of Golgi structure; the function may be independent of its GEF activity. Required for the maturation of integrin beta-1 in the Golgi. Involved in the establishment and persistence of cell polarity during directed cell movement in wound healing. Proposed to act as A kinase-anchoring protein (AKAP) and may mediate crosstalk between Arf and PKA pathways. Inhibits GAP activity of MYO9B probably through competitive RhoA binding. The function in the nucleus remains to be determined. This Homo sapiens (Human) protein is Brefeldin A-inhibited guanine nucleotide-exchange protein 1 (ARFGEF1).